The sequence spans 491 residues: Ketol-acid reductoisomerase (NADP(+)) (491 aa).

Residues 17-208 (LGKCRFMSRD…GGHRAGVLES (192 aa)) enclose the KARI N-terminal Rossmann domain. Residues 45 to 48 (CGAQ), arginine 68, arginine 76, serine 78, and 108 to 110 (DKQ) each bind NADP(+). The active site involves histidine 132. Glycine 158 contributes to the NADP(+) binding site. 2 KARI C-terminal knotted domains span residues 209–344 (SFVA…NYPE) and 345–484 (YEGK…MTDM). Aspartate 217, glutamate 221, glutamate 389, and glutamate 393 together coordinate Mg(2+). Residue serine 414 participates in substrate binding.

It belongs to the ketol-acid reductoisomerase family. It depends on Mg(2+) as a cofactor.

The catalysed reaction is (2R)-2,3-dihydroxy-3-methylbutanoate + NADP(+) = (2S)-2-acetolactate + NADPH + H(+). It carries out the reaction (2R,3R)-2,3-dihydroxy-3-methylpentanoate + NADP(+) = (S)-2-ethyl-2-hydroxy-3-oxobutanoate + NADPH + H(+). The protein operates within amino-acid biosynthesis; L-isoleucine biosynthesis; L-isoleucine from 2-oxobutanoate: step 2/4. Its pathway is amino-acid biosynthesis; L-valine biosynthesis; L-valine from pyruvate: step 2/4. In terms of biological role, involved in the biosynthesis of branched-chain amino acids (BCAA). Catalyzes an alkyl-migration followed by a ketol-acid reduction of (S)-2-acetolactate (S2AL) to yield (R)-2,3-dihydroxy-isovalerate. In the isomerase reaction, S2AL is rearranged via a Mg-dependent methyl migration to produce 3-hydroxy-3-methyl-2-ketobutyrate (HMKB). In the reductase reaction, this 2-ketoacid undergoes a metal-dependent reduction by NADPH to yield (R)-2,3-dihydroxy-isovalerate. This is Ketol-acid reductoisomerase (NADP(+)) from Proteus mirabilis (strain HI4320).